Consider the following 425-residue polypeptide: UPF0229 protein SG1344 (425 aa).

A disordered region spans residues 49–109; it reads GESVSIPNTD…GQGSVSQDGE (61 aa). Over residues 50–59 the composition is skewed to polar residues; the sequence is ESVSIPNTDI. The span at 77 to 90 shows a compositional bias: basic and acidic residues; sequence PGNDHFVQNDRIER.

The protein belongs to the UPF0229 family.

The chain is UPF0229 protein SG1344 from Sodalis glossinidius (strain morsitans).